Consider the following 83-residue polypeptide: Exodeoxyribonuclease 7 small subunit (83 aa).

Belongs to the XseB family. Heterooligomer composed of large and small subunits.

It is found in the cytoplasm. The catalysed reaction is Exonucleolytic cleavage in either 5'- to 3'- or 3'- to 5'-direction to yield nucleoside 5'-phosphates.. Bidirectionally degrades single-stranded DNA into large acid-insoluble oligonucleotides, which are then degraded further into small acid-soluble oligonucleotides. The polypeptide is Exodeoxyribonuclease 7 small subunit (Heliobacterium modesticaldum (strain ATCC 51547 / Ice1)).